The sequence spans 368 residues: Phosphate acyltransferase (368 aa).

The segment at alanine 334–threonine 368 is disordered.

The protein belongs to the PlsX family. In terms of assembly, homodimer. Probably interacts with PlsY.

Its subcellular location is the cytoplasm. The enzyme catalyses a fatty acyl-[ACP] + phosphate = an acyl phosphate + holo-[ACP]. Its pathway is lipid metabolism; phospholipid metabolism. Its function is as follows. Catalyzes the reversible formation of acyl-phosphate (acyl-PO(4)) from acyl-[acyl-carrier-protein] (acyl-ACP). This enzyme utilizes acyl-ACP as fatty acyl donor, but not acyl-CoA. This Burkholderia pseudomallei (strain 1106a) protein is Phosphate acyltransferase.